Here is a 1723-residue protein sequence, read N- to C-terminus: Lymphocyte antigen 75 (1723 aa).

The N-terminal stretch at M1 to P27 is a signal peptide. The Extracellular segment spans residues S28 to D1667. Residues N33–D182 enclose the Ricin B-type lectin domain. The N-linked (GlcNAc...) asparagine glycan is linked to N135. The region spanning S164 to L211 is the Fibronectin type-II domain. 4 disulfides stabilise this stretch: C169–C194, C183–C209, C247–C340, and C317–C332. Residues Q225–K341 enclose the C-type lectin 1 domain. 2 N-linked (GlcNAc...) asparagine glycosylation sites follow: N345 and N377. C-type lectin domains lie at N368 to K486, K493 to K625, and S652 to Q791. Cystine bridges form between C389/C485 and C462/C477. The N-linked (GlcNAc...) asparagine glycan is linked to N529. 3 disulfide bridges follow: C597–C614, C678–C790, and C752–C782. Residues N843 and N865 are each glycosylated (N-linked (GlcNAc...) asparagine). Y934 carries the post-translational modification Phosphotyrosine. N935, N1077, and N1104 each carry an N-linked (GlcNAc...) asparagine glycan. Residues F959 to K1092 form the C-type lectin 5 domain. Cysteines 1061 and 1081 form a disulfide. The 113-residue stretch at Y1111–Y1223 folds into the C-type lectin 6 domain. An intrachain disulfide couples C1198 to C1212. N-linked (GlcNAc...) asparagine glycans are attached at residues N1226, N1321, and N1393. The C-type lectin 7 domain maps to F1252–Q1375. C-type lectin domains are found at residues Y1402 to K1514 and Y1543 to I1662. A disulfide bond links C1489 and C1503. N-linked (GlcNAc...) asparagine glycans are attached at residues N1594 and N1627. A disulfide bridge connects residues C1636 and C1651. The helical transmembrane segment at Y1668–L1692 threads the bilayer. Residues Q1693–D1723 are Cytoplasmic-facing. Phosphoserine occurs at positions 1704 and 1720.

N-glycosylated. Expressed in dendritic and thymic epithelial cells and lymph nodes.

It is found in the membrane. Acts as an endocytic receptor to direct captured antigens from the extracellular space to a specialized antigen-processing compartment. Causes reduced proliferation of B lymphocytes. This chain is Lymphocyte antigen 75 (Ly75), found in Mus musculus (Mouse).